The following is a 491-amino-acid chain: Synaptotagmin-9 (491 aa).

Residues 1-52 (MPGARDALCHQALQLLAELCARGALEHDSCQDFIYHLRDRARPRLRDPDISV) are Vesicular-facing. A cysteine motif region spans residues 9–31 (CHQALQLLAELCARGALEHDSCQ). Residues 53–73 (SLLTLVVTACGLALFGVSLFV) form a helical membrane-spanning segment. The Cytoplasmic segment spans residues 74–491 (SWKLCWVPWR…AHWHSLLEKR (418 aa)). Polar residues predominate over residues 91-104 (SKDNNQEPLNYTDT). A disordered region spans residues 91–147 (SKDNNQEPLNYTDTETNEQENSEDFLDPPTPCPDSSMKISHTSPDIPLSTQPGGQDN). The segment covering 105-116 (ETNEQENSEDFL) has biased composition (acidic residues). A compositionally biased stretch (polar residues) spans 127–144 (MKISHTSPDIPLSTQPGG). Phosphoserine is present on S177. 2 consecutive C2 domains span residues 220 to 341 (ACGK…ILWK) and 352 to 485 (DLGE…AHWH). 11 residues coordinate Ca(2+): D251, D257, D309, F310, D311, S314, D317, D383, D389, D443, and D445.

This sequence belongs to the synaptotagmin family. As to quaternary structure, homodimer; disulfide-linked via the cysteine motif. Can also form heterodimers with SYT3, SYT6, SYT7 and SYT10. Requires Ca(2+) as cofactor.

It localises to the cytoplasmic vesicle. The protein localises to the secretory vesicle. It is found in the synaptic vesicle membrane. Functionally, may be involved in Ca(2+)-dependent exocytosis of secretory vesicles through Ca(2+) and phospholipid binding to the C2 domain or may serve as Ca(2+) sensors in the process of vesicular trafficking and exocytosis. This is Synaptotagmin-9 (Syt9) from Rattus norvegicus (Rat).